Consider the following 420-residue polypeptide: 4-hydroxy-3-methylbut-2-en-1-yl diphosphate synthase (flavodoxin) (420 aa).

Positions 307, 310, 353, and 360 each coordinate [4Fe-4S] cluster.

It belongs to the IspG family. The cofactor is [4Fe-4S] cluster.

It catalyses the reaction (2E)-4-hydroxy-3-methylbut-2-enyl diphosphate + oxidized [flavodoxin] + H2O + 2 H(+) = 2-C-methyl-D-erythritol 2,4-cyclic diphosphate + reduced [flavodoxin]. It functions in the pathway isoprenoid biosynthesis; isopentenyl diphosphate biosynthesis via DXP pathway; isopentenyl diphosphate from 1-deoxy-D-xylulose 5-phosphate: step 5/6. Converts 2C-methyl-D-erythritol 2,4-cyclodiphosphate (ME-2,4cPP) into 1-hydroxy-2-methyl-2-(E)-butenyl 4-diphosphate. This chain is 4-hydroxy-3-methylbut-2-en-1-yl diphosphate synthase (flavodoxin), found in Brucella suis (strain ATCC 23445 / NCTC 10510).